A 212-amino-acid polypeptide reads, in one-letter code: Leucyl/phenylalanyl-tRNA--protein transferase (212 aa).

The protein belongs to the L/F-transferase family.

The protein localises to the cytoplasm. The catalysed reaction is N-terminal L-lysyl-[protein] + L-leucyl-tRNA(Leu) = N-terminal L-leucyl-L-lysyl-[protein] + tRNA(Leu) + H(+). It carries out the reaction N-terminal L-arginyl-[protein] + L-leucyl-tRNA(Leu) = N-terminal L-leucyl-L-arginyl-[protein] + tRNA(Leu) + H(+). The enzyme catalyses L-phenylalanyl-tRNA(Phe) + an N-terminal L-alpha-aminoacyl-[protein] = an N-terminal L-phenylalanyl-L-alpha-aminoacyl-[protein] + tRNA(Phe). Its function is as follows. Functions in the N-end rule pathway of protein degradation where it conjugates Leu, Phe and, less efficiently, Met from aminoacyl-tRNAs to the N-termini of proteins containing an N-terminal arginine or lysine. This Paracoccus denitrificans (strain Pd 1222) protein is Leucyl/phenylalanyl-tRNA--protein transferase.